Consider the following 495-residue polypeptide: Aspartyl/glutamyl-tRNA(Asn/Gln) amidotransferase subunit B (495 aa).

Belongs to the GatB/GatE family. GatB subfamily. In terms of assembly, heterotrimer of A, B and C subunits.

The enzyme catalyses L-glutamyl-tRNA(Gln) + L-glutamine + ATP + H2O = L-glutaminyl-tRNA(Gln) + L-glutamate + ADP + phosphate + H(+). It catalyses the reaction L-aspartyl-tRNA(Asn) + L-glutamine + ATP + H2O = L-asparaginyl-tRNA(Asn) + L-glutamate + ADP + phosphate + 2 H(+). Functionally, allows the formation of correctly charged Asn-tRNA(Asn) or Gln-tRNA(Gln) through the transamidation of misacylated Asp-tRNA(Asn) or Glu-tRNA(Gln) in organisms which lack either or both of asparaginyl-tRNA or glutaminyl-tRNA synthetases. The reaction takes place in the presence of glutamine and ATP through an activated phospho-Asp-tRNA(Asn) or phospho-Glu-tRNA(Gln). The chain is Aspartyl/glutamyl-tRNA(Asn/Gln) amidotransferase subunit B from Acinetobacter baylyi (strain ATCC 33305 / BD413 / ADP1).